The chain runs to 334 residues: Ornithine carbamoyltransferase (334 aa).

Carbamoyl phosphate contacts are provided by residues 56–59, Gln-83, Arg-107, and 134–137; these read STRT and HPTQ. L-ornithine-binding positions include Asn-168, Asp-232, and 236 to 237; that span reads SM. Carbamoyl phosphate is bound by residues 274 to 275 and Arg-320; that span reads CL.

This sequence belongs to the aspartate/ornithine carbamoyltransferase superfamily. OTCase family.

It localises to the cytoplasm. The enzyme catalyses carbamoyl phosphate + L-ornithine = L-citrulline + phosphate + H(+). It functions in the pathway amino-acid biosynthesis; L-arginine biosynthesis; L-arginine from L-ornithine and carbamoyl phosphate: step 1/3. Reversibly catalyzes the transfer of the carbamoyl group from carbamoyl phosphate (CP) to the N(epsilon) atom of ornithine (ORN) to produce L-citrulline. In Escherichia coli O45:K1 (strain S88 / ExPEC), this protein is Ornithine carbamoyltransferase.